The chain runs to 75 residues: Translational regulator CsrA (75 aa).

This sequence belongs to the CsrA/RsmA family. In terms of assembly, homodimer; the beta-strands of each monomer intercalate to form a hydrophobic core, while the alpha-helices form wings that extend away from the core.

The protein resides in the cytoplasm. Its function is as follows. A translational regulator that binds mRNA to regulate translation initiation and/or mRNA stability. Usually binds in the 5'-UTR at or near the Shine-Dalgarno sequence preventing ribosome-binding, thus repressing translation. Its main target seems to be the major flagellin gene, while its function is anatagonized by FliW. The protein is Translational regulator CsrA of Exiguobacterium sp. (strain ATCC BAA-1283 / AT1b).